The chain runs to 1403 residues: DNA-directed RNA polymerase subunit beta' (1403 aa).

Positions 70, 72, 85, and 88 each coordinate Zn(2+). The Mg(2+) site is built by D461, D463, and D465. The tract at residues 687–708 (QQISQEETTGDRDGKRETRKQP) is disordered. A compositionally biased stretch (basic and acidic residues) spans 695 to 706 (TGDRDGKRETRK). Zn(2+) contacts are provided by C805, C879, C886, and C889. The disordered stretch occupies residues 1381 to 1403 (THGDTGPLGEPSRPVGTQTTGAA).

It belongs to the RNA polymerase beta' chain family. In terms of assembly, the RNAP catalytic core consists of 2 alpha, 1 beta, 1 beta' and 1 omega subunit. When a sigma factor is associated with the core the holoenzyme is formed, which can initiate transcription. It depends on Mg(2+) as a cofactor. The cofactor is Zn(2+).

The catalysed reaction is RNA(n) + a ribonucleoside 5'-triphosphate = RNA(n+1) + diphosphate. DNA-dependent RNA polymerase catalyzes the transcription of DNA into RNA using the four ribonucleoside triphosphates as substrates. The chain is DNA-directed RNA polymerase subunit beta' from Myxococcus xanthus (strain DK1622).